Here is a 325-residue protein sequence, read N- to C-terminus: MTATATPVPTVASHAQDITLPPPPKGDITTPILFAQDFQKPSTGYMFIKNPPPAGVPYTNIRGEPAMVTVEDLRGKENSVNLDRDSLQVLQGLTDVPRSPEVNWNSVESVEKTFYPAVEAAIKSAIPGAHTVHIFRHGIRHTQNWPVPYNPPAMIAHLDQTGPAAINRVLRHMGPVEGPRLLQGRYRIVHFWTPLNGPVYTCPVAVASSATVKDNDIQIFVSHLGGIGGLDMPLGRPVAKPDASEQYREDFGAPRYADGQRWFYLSGITQDEALLIQIFDSNALQKDSTVQGGRAVHSAFRDPRTPQGAPDRWSIEVSCLVFSDE.

Positions 1-12 are enriched in low complexity; it reads MTATATPVPTVA. The interval 1–25 is disordered; sequence MTATATPVPTVASHAQDITLPPPPK.

This sequence belongs to the asaB hydroxylase/desaturase family.

Its pathway is secondary metabolite biosynthesis. In terms of biological role, hydroxylase/desaturase; part of the gene cluster that mediates the biosynthesis of oxaleimides, cytotoxic compounds containing an unusual disubstituted succinimide moiety. The first step of the pathway is provided by the HR-PKS poxF that serves in a new mode of collaborative biosynthesis with the PKS-NRPS poxE, by providing the olefin containing amino acid substrate via the synthesis of an ACP-bound dec-4-enoate. The cytochrome P450 monooxygenase poxM-catalyzed oxidation at the alpha-position creates the enzyme-bound 2-hydroxydec-4-enoyl-ACP thioester, which may be prone to spontaneous hydrolysis to yield 2-hydroxydec-4-enoic acid due to increased electrophilicity of the carbonyl. 2-hydroxydec-4-enoic acid can then be further oxidized by poxM to yield the alpha-ketoacid 2-oxodec-4-enoicacid, which is reductively aminated by the aminotransferase poxL to yield (S,E)-2-aminodec-4-enoic acid. The Hybrid PKS-NRPS synthetase poxE then performs condensation between the octaketide product of its PKS modules and the amino group of (S,E)-2-aminodec-4-enoic acid which is activated and incorporated by the adenylation domain. The resulting aminoacyl product can be cyclized by the Diels-Alderase PoxQ and reductively released by the reductive (R) domain of poxE to yield an aldehyde intermediate. The released aldehyde is then substrate for a Knoevenagel condensation by the hydrolyase poxO followed by an oxidation at the 5-position of the pyrrolidone ring. The presence of the olefin from the amino acid building block allows for migration of the substituted allyl group to occur. This allylic transposition reaction takes place in a conjugate addition, semipinacol-like fashion to yield a succinimide intermediate. Iterative two-electron oxidations of the C7 methyl of the succinimide intermediate to the carboxylic acid can be catalyzed by one of two remaining cytochrome P450 monooxygenasess poxC or poxD to yield oxaleimide A. Subsequent oxidation yields the maleimide scaffold oxaleimide I. Both oxaleimide A and oxaleimide I can undergo oxidative modifications in the decalin ring to yield the series of products oxaleimides B to H. The chain is Hydroxylase/desaturase poxK from Penicillium oxalicum (strain 114-2 / CGMCC 5302) (Penicillium decumbens).